The sequence spans 245 residues: tRNA1(Val) (adenine(37)-N6)-methyltransferase (245 aa).

The protein belongs to the methyltransferase superfamily. tRNA (adenine-N(6)-)-methyltransferase family.

It is found in the cytoplasm. The catalysed reaction is adenosine(37) in tRNA1(Val) + S-adenosyl-L-methionine = N(6)-methyladenosine(37) in tRNA1(Val) + S-adenosyl-L-homocysteine + H(+). In terms of biological role, specifically methylates the adenine in position 37 of tRNA(1)(Val) (anticodon cmo5UAC). In Escherichia coli O139:H28 (strain E24377A / ETEC), this protein is tRNA1(Val) (adenine(37)-N6)-methyltransferase.